Reading from the N-terminus, the 402-residue chain is Protein prenyltransferase alpha subunit repeat-containing protein 1 (402 aa).

An N-acetylalanine modification is found at A2. 4 PFTA repeats span residues 87–120 (LIDV…LNPI), 122–155 (DLHL…QETS), 180–213 (EMEV…KLDV), and 219–252 (ELSS…SQTV). The disordered stretch occupies residues 263 to 282 (LRSEPALVPPKDEEAAVSTE). One copy of the PFTA 5 repeat lies at 295–328 (EVEFSTDLIDSYPGHETLWCHRRHIFYLQHHLNA).

It belongs to the protein prenyltransferase subunit alpha family.

This is Protein prenyltransferase alpha subunit repeat-containing protein 1 (PTAR1) from Homo sapiens (Human).